The chain runs to 185 residues: Pyridoxal 5'-phosphate synthase subunit PdxT (185 aa).

46–48 is an L-glutamine binding site; it reads GES. Catalysis depends on cysteine 78, which acts as the Nucleophile. L-glutamine-binding positions include arginine 106 and 132–133; that span reads IR. Catalysis depends on charge relay system residues histidine 168 and glutamate 170.

The protein belongs to the glutaminase PdxT/SNO family. In the presence of PdxS, forms a dodecamer of heterodimers. Only shows activity in the heterodimer.

The catalysed reaction is aldehydo-D-ribose 5-phosphate + D-glyceraldehyde 3-phosphate + L-glutamine = pyridoxal 5'-phosphate + L-glutamate + phosphate + 3 H2O + H(+). It carries out the reaction L-glutamine + H2O = L-glutamate + NH4(+). The protein operates within cofactor biosynthesis; pyridoxal 5'-phosphate biosynthesis. Functionally, catalyzes the hydrolysis of glutamine to glutamate and ammonia as part of the biosynthesis of pyridoxal 5'-phosphate. The resulting ammonia molecule is channeled to the active site of PdxS. In Corynebacterium diphtheriae (strain ATCC 700971 / NCTC 13129 / Biotype gravis), this protein is Pyridoxal 5'-phosphate synthase subunit PdxT.